The sequence spans 157 residues: Deoxyuridine 5'-triphosphate nucleotidohydrolase (157 aa).

Residues 73 to 75, Asn86, and 90 to 92 contribute to the substrate site; these read RSG and TID.

The protein belongs to the dUTPase family. Mg(2+) serves as cofactor.

It carries out the reaction dUTP + H2O = dUMP + diphosphate + H(+). It participates in pyrimidine metabolism; dUMP biosynthesis; dUMP from dCTP (dUTP route): step 2/2. Its function is as follows. This enzyme is involved in nucleotide metabolism: it produces dUMP, the immediate precursor of thymidine nucleotides and it decreases the intracellular concentration of dUTP so that uracil cannot be incorporated into DNA. The chain is Deoxyuridine 5'-triphosphate nucleotidohydrolase from Azorhizobium caulinodans (strain ATCC 43989 / DSM 5975 / JCM 20966 / LMG 6465 / NBRC 14845 / NCIMB 13405 / ORS 571).